A 319-amino-acid chain; its full sequence is Phospho-N-acetylmuramoyl-pentapeptide-transferase (319 aa).

10 helical membrane-spanning segments follow: residues 1–21, 53–73, 77–97, 117–137, 140–160, 172–192, 195–215, 221–241, 249–269, and 298–318; these read MSIL…FLLM, TMGG…VGAW, LNGT…IGMW, FLAQ…EGFQ, FGLT…MVGF, GLVT…ALVQ, TEVA…FPFN, IFMG…VALV, LIIG…VAYF, and GVFW…ILFL.

Belongs to the glycosyltransferase 4 family. MraY subfamily. Mg(2+) is required as a cofactor.

The protein resides in the cell membrane. It carries out the reaction UDP-N-acetyl-alpha-D-muramoyl-L-alanyl-gamma-D-glutamyl-L-lysyl-D-alanyl-D-alanine + di-trans,octa-cis-undecaprenyl phosphate = Mur2Ac(oyl-L-Ala-gamma-D-Glu-L-Lys-D-Ala-D-Ala)-di-trans,octa-cis-undecaprenyl diphosphate + UMP. It participates in cell wall biogenesis; peptidoglycan biosynthesis. Functionally, catalyzes the initial step of the lipid cycle reactions in the biosynthesis of the cell wall peptidoglycan: transfers peptidoglycan precursor phospho-MurNAc-pentapeptide from UDP-MurNAc-pentapeptide onto the lipid carrier undecaprenyl phosphate, yielding undecaprenyl-pyrophosphoryl-MurNAc-pentapeptide, known as lipid I. The chain is Phospho-N-acetylmuramoyl-pentapeptide-transferase from Limosilactobacillus fermentum (strain NBRC 3956 / LMG 18251) (Lactobacillus fermentum).